The sequence spans 180 residues: Ribosome-recycling factor (180 aa).

This sequence belongs to the RRF family.

Its subcellular location is the cytoplasm. Functionally, responsible for the release of ribosomes from messenger RNA at the termination of protein biosynthesis. May increase the efficiency of translation by recycling ribosomes from one round of translation to another. This is Ribosome-recycling factor from Chlamydia caviae (strain ATCC VR-813 / DSM 19441 / 03DC25 / GPIC) (Chlamydophila caviae).